A 276-amino-acid polypeptide reads, in one-letter code: MTQQVDRYAVFGNPIGQSKSPFIHTLFARQTSQQLTYSALQPEHGEFITAAKAFFSEGGRGCNVTAPFKEDAYQFANRLTERAELAGAVNTLKKLDDGEIIGDNTDGEGLVQDLLQHQVTLKGARVLLLGAGGAARGVIQPLLDQKPQQLVVANRTSSKAELLAEMFSSHGNIKGIGLSDVNEGFDVIINSTSSGLSGQLPEVSDVIFNSNSTVYDMVYGSGTTVFNQWALDNGVHAAYDGLGMLVGQAAESFMLWRGLRPGTKQILRELRKNLEM.

Residues 18–20 and T65 contribute to the shikimate site; that span reads SKS. Residue K69 is the Proton acceptor of the active site. E81 contacts NADP(+). Shikimate is bound by residues N90 and D106. NADP(+) contacts are provided by residues 130-134, 154-159, and M217; these read GAGGA and NRTSSK. Y219 contacts shikimate. Position 241 (G241) interacts with NADP(+).

This sequence belongs to the shikimate dehydrogenase family. In terms of assembly, homodimer.

The catalysed reaction is shikimate + NADP(+) = 3-dehydroshikimate + NADPH + H(+). It functions in the pathway metabolic intermediate biosynthesis; chorismate biosynthesis; chorismate from D-erythrose 4-phosphate and phosphoenolpyruvate: step 4/7. Its function is as follows. Involved in the biosynthesis of the chorismate, which leads to the biosynthesis of aromatic amino acids. Catalyzes the reversible NADPH linked reduction of 3-dehydroshikimate (DHSA) to yield shikimate (SA). This is Shikimate dehydrogenase (NADP(+)) from Vibrio atlanticus (strain LGP32) (Vibrio splendidus (strain Mel32)).